The chain runs to 621 residues: 1-deoxy-D-xylulose-5-phosphate synthase (621 aa).

Thiamine diphosphate contacts are provided by residues H80 and 121 to 123; that span reads GHS. Residue D152 participates in Mg(2+) binding. Thiamine diphosphate contacts are provided by residues 153-154, N181, Y288, and E370; that span reads GA. N181 contacts Mg(2+).

This sequence belongs to the transketolase family. DXPS subfamily. Homodimer. The cofactor is Mg(2+). Thiamine diphosphate serves as cofactor.

The enzyme catalyses D-glyceraldehyde 3-phosphate + pyruvate + H(+) = 1-deoxy-D-xylulose 5-phosphate + CO2. Its pathway is metabolic intermediate biosynthesis; 1-deoxy-D-xylulose 5-phosphate biosynthesis; 1-deoxy-D-xylulose 5-phosphate from D-glyceraldehyde 3-phosphate and pyruvate: step 1/1. Functionally, catalyzes the acyloin condensation reaction between C atoms 2 and 3 of pyruvate and glyceraldehyde 3-phosphate to yield 1-deoxy-D-xylulose-5-phosphate (DXP). This chain is 1-deoxy-D-xylulose-5-phosphate synthase, found in Edwardsiella ictaluri (strain 93-146).